The sequence spans 74 residues: Antimicrobial peptide HsAp1 (74 aa).

The N-terminal stretch at 1–21 is a signal peptide; the sequence is MSRRVILTLVLVTILVKTMAG. Residues 22 to 33 constitute a propeptide that is removed on maturation; that stretch reads MESKKVETTDEI. The residue at position 65 (proline 65) is a Proline amide. The propeptide occupies 69 to 74; that stretch reads AISEQT.

It belongs to the non-disulfide-bridged peptide (NDBP) superfamily. Medium-length antimicrobial peptide (group 3) family. Expressed by the venom gland.

Its subcellular location is the secreted. It is found in the target cell membrane. In terms of biological role, possesses antimicrobial activity against both Gram-negative (MIC=23.8-51.2 uM) and Gram-positive (MIC=11.8-46.5 uM) bacteria, as well as against the fungus C.tropicalis (MIC=48.6 uM). Also possesses a relatively high hemolytic activity. May act by disrupting the integrity of the bacterial cell membrane. The chain is Antimicrobial peptide HsAp1 from Heterometrus spinifer (Asia giant forest scorpion).